Here is a 428-residue protein sequence, read N- to C-terminus: Isocitrate dehydrogenase [NADP], mitochondrial (428 aa).

Residues 1–16 (MSMLSRRLFSTSRLAA) constitute a mitochondrion transit peptide. Residues 91–93 (TIT) and Arg98 contribute to the NADP(+) site. Substrate is bound at residue Thr93. Substrate is bound by residues 110 to 116 (SPNGTIR), Arg125, and Arg148. Position 269 (Asp269) interacts with Mn(2+). Residue Lys277 coordinates NADP(+). Asp292 lines the Mn(2+) pocket. NADP(+) is bound by residues 327-332 (GTVTRH) and Asn345.

It belongs to the isocitrate and isopropylmalate dehydrogenases family. Homodimer. Requires Mg(2+) as cofactor. It depends on Mn(2+) as a cofactor.

Its subcellular location is the mitochondrion. The enzyme catalyses D-threo-isocitrate + NADP(+) = 2-oxoglutarate + CO2 + NADPH. The enzyme is subject to end product inhibition by NADPH and 2-oxoglutarate. In terms of biological role, mitochondrial IDP1 may regulate flux through the tricarboxylic acid cycle and respiration. Its probably critical function is the production of NADPH. This is Isocitrate dehydrogenase [NADP], mitochondrial (IDP1) from Saccharomyces cerevisiae (strain ATCC 204508 / S288c) (Baker's yeast).